A 257-amino-acid polypeptide reads, in one-letter code: Ribosomal RNA small subunit methyltransferase J (257 aa).

S-adenosyl-L-methionine contacts are provided by residues Arg-107–Asp-108, Glu-123–Arg-124, and Asp-177.

Belongs to the methyltransferase superfamily. RsmJ family.

Its subcellular location is the cytoplasm. The catalysed reaction is guanosine(1516) in 16S rRNA + S-adenosyl-L-methionine = N(2)-methylguanosine(1516) in 16S rRNA + S-adenosyl-L-homocysteine + H(+). Its function is as follows. Specifically methylates the guanosine in position 1516 of 16S rRNA. The polypeptide is Ribosomal RNA small subunit methyltransferase J (Haemophilus influenzae (strain ATCC 51907 / DSM 11121 / KW20 / Rd)).